The primary structure comprises 402 residues: Multidrug resistance protein MdtH (402 aa).

At 1-12 the chain is on the cytoplasmic side; the sequence is MSRVSQARNLGK. Residues 13–33 traverse the membrane as a helical segment; it reads YFLLIDNMLVVLGFFVVFPLI. Topologically, residues 34 to 98 are periplasmic; that stretch reads SIRFVDQMGW…GFATMGIAHE (65 aa). A helical transmembrane segment spans residues 99-116; that stretch reads PWLLWFSCLLSGLGGTLF. Residues 117 to 138 are Cytoplasmic-facing; the sequence is DPPRSALVVKLIRPQQRGRFFS. A helical membrane pass occupies residues 139–159; that stretch reads LLMMQDSAGAVIGALLGSWLL. Topologically, residues 160–164 are periplasmic; the sequence is QYDFR. A helical transmembrane segment spans residues 165 to 185; that stretch reads LVCATGAVLFVLCAAFNAWLL. Over 186–213 the chain is Cytoplasmic; that stretch reads PAWKLSTVRTPVREGMTRVMRDKRFVTY. The helical transmembrane segment at 214–234 threads the bilayer; it reads VLTLAGYYMLAVQVMLMLPIM. Residues 235 to 243 lie on the Periplasmic side of the membrane; the sequence is VNDVAGAPS. Residues 244–264 form a helical membrane-spanning segment; sequence AVKWMYAIEACLSLTLLYPIA. The Cytoplasmic portion of the chain corresponds to 265–276; sequence RWSEKHFRLEHR. Residues 277-297 form a helical membrane-spanning segment; it reads LMAGLLIMSLSMMPVGMVSGL. The Periplasmic segment spans residues 298–299; it reads QQ. Residues 300–320 form a helical membrane-spanning segment; the sequence is LFTLICLFYIGSIIAEPARET. At 321–339 the chain is on the cytoplasmic side; sequence LSASLADARARGSYMGCSR. A helical membrane pass occupies residues 340 to 360; it reads LGLAIGGAIGYIGGGWLFDLG. Topologically, residues 361-367 are periplasmic; the sequence is KSAHQPE. A helical transmembrane segment spans residues 368–388; the sequence is LPWMMLGIIGIFTFLALGWQF. The Cytoplasmic portion of the chain corresponds to 389 to 402; the sequence is SQKRAARRLLERDA.

This sequence belongs to the major facilitator superfamily. DHA1 family. MdtH (TC 2.A.1.2.21) subfamily.

The protein resides in the cell inner membrane. Its function is as follows. Confers resistance to norfloxacin and enoxacin. The protein is Multidrug resistance protein MdtH of Escherichia coli (strain SE11).